The following is a 308-amino-acid chain: Ribonuclease Z (308 aa).

Zn(2+) contacts are provided by H62, H64, D66, H67, H140, D211, and H269. Catalysis depends on D66, which acts as the Proton acceptor.

This sequence belongs to the RNase Z family. As to quaternary structure, homodimer. Zn(2+) is required as a cofactor.

The enzyme catalyses Endonucleolytic cleavage of RNA, removing extra 3' nucleotides from tRNA precursor, generating 3' termini of tRNAs. A 3'-hydroxy group is left at the tRNA terminus and a 5'-phosphoryl group is left at the trailer molecule.. Zinc phosphodiesterase, which displays some tRNA 3'-processing endonuclease activity. Probably involved in tRNA maturation, by removing a 3'-trailer from precursor tRNA. In Treponema denticola (strain ATCC 35405 / DSM 14222 / CIP 103919 / JCM 8153 / KCTC 15104), this protein is Ribonuclease Z.